Here is a 157-residue protein sequence, read N- to C-terminus: NudC domain-containing protein 2 (157 aa).

N-acetylserine is present on Ser2. In terms of domain architecture, CS spans 14–104 (CGTPWGQWYQ…DAANCWTSLL (91 aa)). Residues 134–157 (FDFSGAEISGNYTKGGPDFSNLEK) are disordered. Ser142 is modified (phosphoserine). Tyr145 carries the phosphotyrosine modification.

Interacts with LIS1.

The protein localises to the chromosome. Its subcellular location is the centromere. The protein resides in the kinetochore. It is found in the cytoplasm. It localises to the cytoskeleton. The protein localises to the microtubule organizing center. Its subcellular location is the centrosome. The protein resides in the spindle pole. May regulate the LIS1/dynein pathway by stabilizing LIS1 with Hsp90 chaperone. The polypeptide is NudC domain-containing protein 2 (NUDCD2) (Homo sapiens (Human)).